The chain runs to 558 residues: Potassium-transporting ATPase potassium-binding subunit 2 (558 aa).

The next 12 membrane-spanning stretches (helical) occupy residues 1 to 21 (MSIV…SRYL), 60 to 80 (IKHF…LLLI), 129 to 149 (VITF…IAML), 169 to 189 (FIVR…ISQG), 246 to 266 (WSNY…VFLF), 281 to 301 (IMIF…CLYF), 326 to 346 (FGIG…TGTV), 353 to 373 (LTPL…VFGG), 376 to 396 (VGLM…SLMI), 415 to 435 (IALS…LAFI), 485 to 505 (IVML…VSSL), and 523 to 543 (LFFS…TFLP).

Belongs to the KdpA family. In terms of assembly, the system is composed of three essential subunits: KdpA, KdpB and KdpC.

The protein resides in the cell membrane. In terms of biological role, part of the high-affinity ATP-driven potassium transport (or Kdp) system, which catalyzes the hydrolysis of ATP coupled with the electrogenic transport of potassium into the cytoplasm. This subunit binds the extracellular potassium ions and delivers the ions to the membrane domain of KdpB through an intramembrane tunnel. The protein is Potassium-transporting ATPase potassium-binding subunit 2 of Staphylococcus aureus (strain Mu50 / ATCC 700699).